Here is a 330-residue protein sequence, read N- to C-terminus: MESGSGSGAALNSTPFPTYSTPNFTDDYDWNSSDWYGLTNQCQAVSFSKLIVVPCLVILLVFCLIGNLWLLFKLLEKTVKKVSTFILILMCLNSFWGCLCMIFSIVENFAEFSTSVCKLRMVVFWVYVFFDMFLICWLCFDTWCAVWFSVRRTEANQKCWVFCTVALIILAFILSMQKALHVEAIKEYGQVRSSCQFHKETHSTLKVFNVAVSVNVLGFLLPLLFLCIFYGMCLWKLYKAVFKTKTKVIKTMLLFVFMFLLTWGPYYILSFIDGLLSAGYISESCSLKKTLGLMLPLLGLWGMAHGGLQVFIYILCNSHFNKSLFSCFKK.

Transmembrane regions (helical) follow at residues 50 to 70 (LIVV…NLWL), 85 to 105 (FILI…IFSI), 121 to 141 (MVVF…LCFD), 160 to 180 (WVFC…QKAL), 210 to 230 (VAVS…CIFY), 252 to 272 (MLLF…LSFI), and 295 to 315 (LPLL…IYIL). Cys117 and Cys195 are disulfide-bonded.

Belongs to the G-protein coupled receptor 1 family.

Its subcellular location is the host membrane. This chain is G-protein coupled receptor 74 (74), found in Equus caballus (Horse).